Here is a 249-residue protein sequence, read N- to C-terminus: Type I iodothyronine deiodinase (249 aa).

Residues 1–12 lie on the Extracellular side of the membrane; that stretch reads MELPLPGLWLKR. The helical; Signal-anchor for type III membrane protein transmembrane segment at 13–33 threads the bilayer; it reads LWVLFQVALHVAMGKVLMTLF. The Cytoplasmic portion of the chain corresponds to 34-249; sequence PGRVKQDILA…VRAVLEKLHS (216 aa). U126 is an active-site residue. Position 126 (U126) is a non-standard amino acid, selenocysteine.

Belongs to the iodothyronine deiodinase family. As to quaternary structure, predominantly monomer. Can form homodimers but homodimerization is not essential for enzyme activity.

The protein localises to the cell membrane. It localises to the endoplasmic reticulum membrane. It is found in the basolateral cell membrane. The catalysed reaction is 3,3',5-triiodo-L-thyronine + iodide + A + H(+) = L-thyroxine + AH2. It catalyses the reaction 3,3',5'-triiodo-L-thyronine + iodide + A + H(+) = L-thyroxine + AH2. It carries out the reaction 3,3'-diiodo-L-thyronine + iodide + A + H(+) = 3,3',5'-triiodo-L-thyronine + AH2. The enzyme catalyses 3,3'-diiodo-L-thyronine + iodide + A + H(+) = 3,3',5-triiodo-L-thyronine + AH2. The catalysed reaction is 3'-iodo-L-thyronine + iodide + A + H(+) = 3',5'-diiodo-L-thyronine + AH2. It catalyses the reaction 3-iodo-L-thyronine + iodide + A + H(+) = 3,5-diiodo-L-thyronine + AH2. It carries out the reaction 3-iodo-L-thyronine + iodide + A + H(+) = 3,3'-diiodo-L-thyronine + AH2. The enzyme catalyses 3,3'-diiodothyronamine + iodide + A + H(+) = 3,3',5'-triiodothyronamine + AH2. The catalysed reaction is 3'-iodothyronamine + iodide + A + H(+) = 3',5'-diiodothyronamine + AH2. It catalyses the reaction 3-iodothyronamine + iodide + A + H(+) = 3,3'-diiodothyronamine + AH2. It carries out the reaction 3,3'-diiodothyronamine + iodide + A + H(+) = 3,3',5-triiodothyronamine + AH2. The enzyme catalyses 3-iodothyronamine + iodide + A + H(+) = 3,5-diiodothyronamine + AH2. The catalysed reaction is 3,3'-diiodo-L-thyronine sulfate + iodide + A + H(+) = 3,3',5'-triiodo-L-thyronine sulfate + AH2. It catalyses the reaction 3,3',5'-triiodo-L-thyronine sulfate + iodide + A + H(+) = L-thyroxine sulfate + AH2. It carries out the reaction 3,3'-diiodo-L-thyronine sulfate + iodide + A + H(+) = 3,3',5-triiodo-L-thyronine sulfate + AH2. Plays a crucial role in the metabolism of thyroid hormones (TH) and has specific roles in TH activation and inactivation by deiodination. Catalyzes the deiodination of L-thyroxine (T4) to 3,5,3'-triiodothyronine (T3) and 3,3',5'-triiodothyronine (rT3) to 3,3'-diiodothyronine (3,3'-T2) via outer-ring deiodination (ORD). Catalyzes the deiodination of T4 to rT3, T3 to 3,3'-T2, 3,5-diiodothyronine (3,5-T2) to 3-monoiodothyronine (3-T1) and 3,3'-T2 to 3-T1 via inner-ring deiodination (IRD). Catalyzes the deiodination of 3',5'-diiodothyronine (3',5'-T2) to 3'-monoiodothyronine (3'-T1) via ORD. Catalyzes the phenolic ring deiodinations of 3,3',5'-triiodothyronamine, 3',5'-diiodothyronamine and 3,3'-diiodothyronamine as well as tyrosyl ring deiodinations of 3,5,3'-triiodothyronamine and 3,5-diiodothyronamine. Catalyzes the deiodination of L-thyroxine sulfate and 3,3',5-triiodo-L-thyronine sulfate via IRD and of 3,3',5'-triiodo-L-thyronine sulfate via ORD. This is Type I iodothyronine deiodinase (DIO1) from Sus scrofa (Pig).